The primary structure comprises 464 residues: Soluble pyridine nucleotide transhydrogenase (464 aa).

FAD is bound at residue 35–44 (EDKSQVGGNC).

This sequence belongs to the class-I pyridine nucleotide-disulfide oxidoreductase family. Requires FAD as cofactor.

The protein resides in the cytoplasm. It carries out the reaction NAD(+) + NADPH = NADH + NADP(+). Conversion of NADPH, generated by peripheral catabolic pathways, to NADH, which can enter the respiratory chain for energy generation. In Hahella chejuensis (strain KCTC 2396), this protein is Soluble pyridine nucleotide transhydrogenase.